A 60-amino-acid polypeptide reads, in one-letter code: Sperm protamine P1 (60 aa).

A disordered region spans residues 1–60; sequence MARYRHSRSRSRSRYRRRRRRRSRYRSQRRRYRGRRRRRSRRGRRRGYSRRRYSRRRRRY.

Belongs to the protamine P1 family. Testis.

The protein localises to the nucleus. The protein resides in the chromosome. Protamines substitute for histones in the chromatin of sperm during the haploid phase of spermatogenesis. They compact sperm DNA into a highly condensed, stable and inactive complex. This is Sperm protamine P1 (PRM1) from Osphranter rufus (Red kangaroo).